The following is a 556-amino-acid chain: MGDNNNSSNFIKNIIIEDLKSGEYEKVVTRFPPEPNGYLHIGHAKSIVLNFSLADEFEGKVNLRFDDTNPSKEDVEYVESIKEDVKWLGYNWDNLCFASSYFERMYEYAVFLIKKGKAYVCDLTADEIREYRGTLTKPGKESPYRNRDVEENFKLFEGMKNGEFKDGEKVLRAKIDMASPNINMRDPVLYRIAHASHHNTGDRWCIYPMYDFAHPLEDAIEGVTHSICTLEFEDHRPLYDWIIQECEIENRPKQIEFARLNMTNTVMSKRKLKQLVDENFVDGWDDPRMPTIAGLRRRGFTPESIRNFCRAIGVSKASSIVDSQMLDYFLRDDLEKEAPRTMAILNPLKVVITNYPEGKTETFKIENNPDDASAGVREVPFSREIYIEQEDFMENPPKKYYRLFPGNEVRLKSAYFIKCTEAIKDKDGNVIELRCTYDPASKGGNSPDGRKVRGTLHWINVDTAIPAEIRLYEPLILEQQEKEGEEDLFLDHVNPNSLKVVKGFVEPDMKHVKSDEKFQFFRHGYFVLDGKCSKNGELVFNRIVSLKSSFKIPENK.

The 'HIGH' region signature appears at 33 to 43; it reads PEPNGYLHIGH. ATP-binding positions include 34 to 36 and 40 to 46; these read EPN and HIGHAKS. 2 residues coordinate L-glutamine: Asp-66 and Tyr-210. ATP is bound by residues Thr-229, 259 to 260, and 267 to 269; these read RL and MSK. The 'KMSKS' region signature appears at 266-270; sequence VMSKR.

It belongs to the class-I aminoacyl-tRNA synthetase family. As to quaternary structure, monomer.

Its subcellular location is the cytoplasm. The catalysed reaction is tRNA(Gln) + L-glutamine + ATP = L-glutaminyl-tRNA(Gln) + AMP + diphosphate. This Clostridium kluyveri (strain ATCC 8527 / DSM 555 / NBRC 12016 / NCIMB 10680 / K1) protein is Glutamine--tRNA ligase.